Here is a 588-residue protein sequence, read N- to C-terminus: Complement component C8 beta chain (588 aa).

Positions 1 to 30 (MFRVAIPRSALNLHSCLLHVTLSLVLISKA) are cleaved as a signal peptide. Positions 31 to 46 (AITTAGNEDSDVREAR) are excised as a propeptide. The TSP type-1 1 domain maps to 58-113 (DCVISDWSAWSRCDTCQKKRYRYAKLDQPSQFGGEPCHFHDMEDEACDVPDRYTCD). Cystine bridges form between cysteine 59–cysteine 94, cysteine 70–cysteine 104, cysteine 73–cysteine 112, cysteine 118–cysteine 129, cysteine 123–cysteine 142, cysteine 136–cysteine 151, and cysteine 158–cysteine 196. Tryptophan 64 and tryptophan 67 each carry a C-linked (Man) tryptophan glycan. One can recognise an LDL-receptor class A domain in the interval 115-152 (IPLCEGFLCTQTGRCIHRTLQCNGEDDCGDMSDEVGCK). Ca(2+) is bound by residues leucine 134, asparagine 137, glutamate 139, aspartate 141, aspartate 147, and glutamate 148. The MACPF domain occupies 154 to 500 (VPKPCRQEAE…EYLAESSSCR (347 aa)). Transmembrane regions (beta stranded) follow at residues 248-255 (TIVSIGFA), 258-265 (GIAEFGFN), 375-382 (TQAGLKIG), and 388-395 (VYVSAGIE). Cystine bridges form between cysteine 374-cysteine 399, cysteine 499-cysteine 547, cysteine 501-cysteine 517, cysteine 504-cysteine 519, and cysteine 521-cysteine 530. An EGF-like domain is found at 501-531 (CAPCHNNGVAVLRGTRCDCVCPTGYTGRGCE). One can recognise a TSP type-1 2 domain in the interval 542–588 (DGSWSCWGAWSSCSGRKMSRSRQCNNPVPSDGGLACRGLQQESTDCF). Tryptophan 548 and tryptophan 551 each carry a C-linked (Man) tryptophan glycan. Cysteines 554 and 587 form a disulfide.

Belongs to the complement C6/C7/C8/C9 family. In terms of assembly, heterotrimer of 3 chains: alpha (C8A), beta (C8B) and gamma (C8G); the alpha and gamma chains are disulfide bonded. Component of the membrane attack complex (MAC), composed of complement C5b, C6, C7, C8A, C8B, C8G and multiple copies of the pore-forming subunit C9.

It localises to the secreted. Its subcellular location is the target cell membrane. Its function is as follows. Component of the membrane attack complex (MAC), a multiprotein complex activated by the complement cascade, which inserts into a target cell membrane and forms a pore, leading to target cell membrane rupture and cell lysis. The MAC is initiated by proteolytic cleavage of C5 into complement C5b in response to the classical, alternative, lectin and GZMK complement pathways. The complement pathways consist in a cascade of proteins that leads to phagocytosis and breakdown of pathogens and signaling that strengthens the adaptive immune system. C8B, together with C8A and C8G, inserts into the target membrane, but does not form pores by itself. During MAC assembly, associates with C5b, C6 and C7 to form the C5b8 intermediate complex that inserts into the target membrane and traverses the bilayer increasing membrane rigidity. This is Complement component C8 beta chain (c8b) from Paralichthys olivaceus (Bastard halibut).